The following is a 227-amino-acid chain: Probable septum site-determining protein MinC (227 aa).

This sequence belongs to the MinC family. Interacts with MinD and FtsZ.

Its function is as follows. Cell division inhibitor that blocks the formation of polar Z ring septums. Rapidly oscillates between the poles of the cell to destabilize FtsZ filaments that have formed before they mature into polar Z rings. Prevents FtsZ polymerization. The chain is Probable septum site-determining protein MinC from Photorhabdus laumondii subsp. laumondii (strain DSM 15139 / CIP 105565 / TT01) (Photorhabdus luminescens subsp. laumondii).